The sequence spans 176 residues: Large ribosomal subunit protein uL6 (176 aa).

Belongs to the universal ribosomal protein uL6 family. In terms of assembly, part of the 50S ribosomal subunit.

In terms of biological role, this protein binds to the 23S rRNA, and is important in its secondary structure. It is located near the subunit interface in the base of the L7/L12 stalk, and near the tRNA binding site of the peptidyltransferase center. The polypeptide is Large ribosomal subunit protein uL6 (Burkholderia vietnamiensis (strain G4 / LMG 22486) (Burkholderia cepacia (strain R1808))).